A 156-amino-acid chain; its full sequence is Transcription elongation factor GreA (156 aa).

Residues 46–66 (AEYHSAREKQSFIEGRIKELE) adopt a coiled-coil conformation.

Belongs to the GreA/GreB family.

Necessary for efficient RNA polymerase transcription elongation past template-encoded arresting sites. The arresting sites in DNA have the property of trapping a certain fraction of elongating RNA polymerases that pass through, resulting in locked ternary complexes. Cleavage of the nascent transcript by cleavage factors such as GreA or GreB allows the resumption of elongation from the new 3'terminus. GreA releases sequences of 2 to 3 nucleotides. In Ruegeria pomeroyi (strain ATCC 700808 / DSM 15171 / DSS-3) (Silicibacter pomeroyi), this protein is Transcription elongation factor GreA.